A 359-amino-acid chain; its full sequence is Alpha-N-acetylneuraminide alpha-2,8-sialyltransferase (359 aa).

Topologically, residues 1–28 are cytoplasmic; that stretch reads MWGRWRGAGGRRGVAQPVIPQMKLLGGR. A helical; Signal-anchor for type II membrane protein membrane pass occupies residues 29-49; sequence VPLGASALGLLIVCWFYIFPG. At 50–359 the chain is on the lumenal side; sequence GERLPGHKEM…KKDVSSKKPH (310 aa). N-linked (GlcNAc...) asparagine glycans are attached at residues asparagine 73 and asparagine 121. 2 disulfide bridges follow: cysteine 140–cysteine 289 and cysteine 154–cysteine 349. Positions 145 and 168 each coordinate CMP-N-acetyl-beta-neuraminate. An N-linked (GlcNAc...) asparagine glycan is attached at asparagine 247. CMP-N-acetyl-beta-neuraminate-binding residues include serine 276, threonine 277, glycine 278, tryptophan 298, and histidine 312. Histidine 324 serves as the catalytic Proton donor/acceptor.

It belongs to the glycosyltransferase 29 family. Expressed in the dorsal blastopore lip and in the presumptive neuroectoderm in stage 11 embryos. During gastrulation, strongly expressed in the involuting mesoderm. At stages 13 and 16, expressed in the neural plate and neural fold, paraxial mesoderm and notochord. At stages 19 and 22 (neural tube and early tailbud), strongly expressed in the neural tube and notochord. At the tadpole stage, expressed in the head region, branchial arches and otic and optic primordia. Also localized in the notochord and weakly expressed in the somites. In adults, expressed in the brain and ovary. Isoform 2 (short) is expressed at a low level in the adult testis and muscle, and at a high level in the skin. Isoform 1 (long) is expressed at a high level in the adult lung and kidney. Both isoforms 1 and 2 are expressed in the gut and liver.

The protein resides in the golgi apparatus membrane. It catalyses the reaction an N-acetyl-alpha-neuraminyl-(2-&gt;3)-beta-D-galactosyl derivative + CMP-N-acetyl-beta-neuraminate = an N-acetyl-alpha-neuraminyl-(2-&gt;8)-N-acetyl-alpha-neuraminyl-(2-&gt;3)-beta-D-galactosyl derivative + CMP + H(+). The enzyme catalyses a ganglioside GM3 (d18:1(4E)) + CMP-N-acetyl-beta-neuraminate = a ganglioside GD3 (d18:1(4E)) + CMP + H(+). The catalysed reaction is a ganglioside GD3 (d18:1(4E)) + CMP-N-acetyl-beta-neuraminate = a ganglioside GT3 (d18:1(4E)) + CMP + H(+). It carries out the reaction a ganglioside GD1a (d18:1(4E)) + CMP-N-acetyl-beta-neuraminate = a ganglioside GT1a (d18:1(4E)) + CMP + H(+). It catalyses the reaction a ganglioside GT1b (d18:1(4E)) + CMP-N-acetyl-beta-neuraminate = a ganglioside GQ1b (d18:1(4E)) + CMP + H(+). The enzyme catalyses a ganglioside GM1b (d18:1(4E)) + CMP-N-acetyl-beta-neuraminate = a ganglioside GD1c (d18:1(4E)) + CMP + H(+). The catalysed reaction is a ganglioside GD3 + CMP-N-acetyl-beta-neuraminate = a ganglioside GT3 + CMP + H(+). It carries out the reaction [alpha-N-acetylneuraminyl-(2-&gt;8)](n)-alpha-N-acetylneuraminyl-(2-&gt;8)-alpha-N-acetylneuraminyl-(2-&gt;3)-beta-D-galactosyl-(1-&gt;4)-beta-D-glucosyl-(1&lt;-&gt;1)-ceramide + CMP-N-acetyl-beta-neuraminate = [alpha-N-acetylneuraminyl-(2-&gt;8)](n+1)-alpha-N-acetylneuraminyl-(2-&gt;8)-alpha-N-acetylneuraminyl-(2-&gt;3)-beta-D-galactosyl-(1-&gt;4)-beta-D-glucosyl-(1&lt;-&gt;1)-ceramide + CMP + H(+). It functions in the pathway protein modification; protein glycosylation. The protein operates within lipid metabolism; sphingolipid metabolism. Its function is as follows. Catalyzes the addition of sialic acid in alpha 2,8-linkage to the sialic acid moiety of the ganglioside GM3 to form ganglioside GD3; gangliosides are a subfamily of complex glycosphingolipds that contain one or more residues of sialic acid. Glycosphingolipids are required for convergence extension movements during early development. Can catalyze the addition of a second alpha-2,8- sialic acid to GD3 to form GT3. Can use GM1b, GD1a and GT1b as acceptor substrates to synthesize GD1c, GT1a and GQ1b respectively. The polypeptide is Alpha-N-acetylneuraminide alpha-2,8-sialyltransferase (Xenopus laevis (African clawed frog)).